A 332-amino-acid polypeptide reads, in one-letter code: Probable allantoicase (332 aa).

Belongs to the allantoicase family.

The catalysed reaction is allantoate + H2O = (S)-ureidoglycolate + urea. It functions in the pathway nitrogen metabolism; (S)-allantoin degradation; (S)-ureidoglycolate from allantoate (aminidohydrolase route): step 1/1. The protein is Probable allantoicase of Pseudomonas aeruginosa (strain LESB58).